The sequence spans 238 residues: Arginine ABC transporter permease protein ArtQ (238 aa).

Over 1–14 the chain is Periplasmic; sequence MNEFFPLASAAGMT. The region spanning 11-223 is the ABC transmembrane type-1 domain; sequence AGMTVGLAVC…VITLLSQYIL (213 aa). Residues 15–35 traverse the membrane as a helical segment; it reads VGLAVCALIVGLALAMFFAVW. Residues 36–48 lie on the Cytoplasmic side of the membrane; it reads ESAKWRPVAWAGS. The helical transmembrane segment at 49-69 threads the bilayer; the sequence is ALVTILRGLPEILVVLFIYFG. At 70–98 the chain is on the periplasmic side; that stretch reads SSQLLLTLSDGFTINLGFVQIPVQMDIEN. Residues 99 to 119 traverse the membrane as a helical segment; that stretch reads FDVSPFLCGVIALSLLYAAYA. The Cytoplasmic portion of the chain corresponds to 120-168; that stretch reads SQTLRGALKAVPVGQWESGQALGLSKSAIFFRLVMPQMWRHALPGLGNQ. Residues 169–189 traverse the membrane as a helical segment; the sequence is WLVLLKDTALVSLISVNDLML. Topologically, residues 190-201 are periplasmic; that stretch reads QTKSIATRTQEP. The chain crosses the membrane as a helical span at residues 202–222; it reads FTWYIVAAAIYLVITLLSQYI. Topologically, residues 223-238 are cytoplasmic; the sequence is LKRIDLRATRFERRPS.

Belongs to the binding-protein-dependent transport system permease family. HisMQ subfamily. In terms of assembly, the complex is composed of two ATP-binding proteins (ArtP), two transmembrane proteins (ArtM and ArtQ) and two solute-binding proteins (ArtJ and ArtI).

Its subcellular location is the cell inner membrane. In terms of biological role, part of the ABC transporter complex ArtPIQMJ involved in arginine transport. Probably responsible for the translocation of the substrate across the membrane. This is Arginine ABC transporter permease protein ArtQ (artQ) from Escherichia coli O6:H1 (strain CFT073 / ATCC 700928 / UPEC).